The primary structure comprises 672 residues: tRNA 5-methylaminomethyl-2-thiouridine biosynthesis bifunctional protein MnmC (672 aa).

A tRNA (mnm(5)s(2)U34)-methyltransferase region spans residues 1–243; that stretch reads MTSITHAELG…KREMIAGCME (243 aa). Residues 269–672 form an FAD-dependent cmnm(5)s(2)U34 oxidoreductase region; the sequence is IGGGIASAAL…LRKGKAITEL (404 aa).

The protein in the N-terminal section; belongs to the methyltransferase superfamily. tRNA (mnm(5)s(2)U34)-methyltransferase family. In the C-terminal section; belongs to the DAO family. It depends on FAD as a cofactor.

The protein resides in the cytoplasm. It carries out the reaction 5-aminomethyl-2-thiouridine(34) in tRNA + S-adenosyl-L-methionine = 5-methylaminomethyl-2-thiouridine(34) in tRNA + S-adenosyl-L-homocysteine + H(+). Functionally, catalyzes the last two steps in the biosynthesis of 5-methylaminomethyl-2-thiouridine (mnm(5)s(2)U) at the wobble position (U34) in tRNA. Catalyzes the FAD-dependent demodification of cmnm(5)s(2)U34 to nm(5)s(2)U34, followed by the transfer of a methyl group from S-adenosyl-L-methionine to nm(5)s(2)U34, to form mnm(5)s(2)U34. The protein is tRNA 5-methylaminomethyl-2-thiouridine biosynthesis bifunctional protein MnmC of Vibrio vulnificus (strain YJ016).